The following is a 528-amino-acid chain: GMP synthase [glutamine-hydrolyzing] (528 aa).

The 192-residue stretch at 13-204 (AIVILDFGSQ…VYDICSCEPD (192 aa)) folds into the Glutamine amidotransferase type-1 domain. Residue Cys-90 is the Nucleophile of the active site. Residues His-178 and Glu-180 contribute to the active site. Positions 205 to 403 (WTTNLFIDEA…LGLPDEIVRR (199 aa)) constitute a GMPS ATP-PPase domain. ATP is bound at residue 232–238 (SGGVDSS).

In terms of assembly, homodimer.

It carries out the reaction XMP + L-glutamine + ATP + H2O = GMP + L-glutamate + AMP + diphosphate + 2 H(+). It functions in the pathway purine metabolism; GMP biosynthesis; GMP from XMP (L-Gln route): step 1/1. Catalyzes the synthesis of GMP from XMP. The chain is GMP synthase [glutamine-hydrolyzing] from Prochlorococcus marinus (strain NATL2A).